Consider the following 338-residue polypeptide: Cytochrome P450 monooxygenase easK (338 aa).

Positions Met1–Ala16 are cleaved as a signal peptide. N-linked (GlcNAc...) asparagine glycosylation is found at Asn240 and Asn327.

Belongs to the cytochrome P450 family. Heme is required as a cofactor.

It participates in alkaloid biosynthesis; ergot alkaloid biosynthesis. In terms of biological role, cytochrome P450 monooxygenase; part of the gene cluster that mediates the biosynthesis of fumiclavanine C, a fungal ergot alkaloid. DmaW catalyzes the first step of ergot alkaloid biosynthesis by condensing dimethylallyl diphosphate (DMAP) and tryptophan to form 4-dimethylallyl-L-tryptophan. The second step is catalyzed by the methyltransferase easF that methylates 4-dimethylallyl-L-tryptophan in the presence of S-adenosyl-L-methionine, resulting in the formation of 4-dimethylallyl-L-abrine. The catalase easC and the FAD-dependent oxidoreductase easE then transform 4-dimethylallyl-L-abrine to chanoclavine-I which is further oxidized by EasD in the presence of NAD(+), resulting in the formation of chanoclavine-I aldehyde. EasA reduces chanoclavine-I aldehyde to dihydrochanoclavine-I aldehyde that spontaneously dehydrates to form 6,8-dimethyl-6,7-didehydroergoline. EasG then catalyzes the reduction of 6,8-dimethyl-6,7-didehydroergoline to form festuclavine. Hydrolysis of festuclavine by easM then leads to the formation of fumigaclavine B which is in turn acetylated by easN to fumigaclavine A. Finally, easL catalyzes the conversion of fumigaclavine A into fumigaclavine C by attaching a dimethylallyl moiety to C-2 of the indole nucleus. The role of the cytochrome P450 monooxygenase easK within the cluster has not been identified yet. This is Cytochrome P450 monooxygenase easK from Aspergillus fumigatus (strain ATCC MYA-4609 / CBS 101355 / FGSC A1100 / Af293) (Neosartorya fumigata).